The primary structure comprises 310 residues: Cysteine synthase (310 aa).

N6-(pyridoxal phosphate)lysine is present on Lys46. Residues Asn76, 180–184 (GTGGT), and Ser268 contribute to the pyridoxal 5'-phosphate site.

Belongs to the cysteine synthase/cystathionine beta-synthase family. In terms of assembly, homodimer. The cofactor is pyridoxal 5'-phosphate.

The enzyme catalyses O-acetyl-L-serine + hydrogen sulfide = L-cysteine + acetate. It participates in amino-acid biosynthesis; L-cysteine biosynthesis; L-cysteine from L-serine: step 2/2. The protein is Cysteine synthase (cysK) of Staphylococcus epidermidis (strain ATCC 35984 / DSM 28319 / BCRC 17069 / CCUG 31568 / BM 3577 / RP62A).